We begin with the raw amino-acid sequence, 388 residues long: Staphopain A (388 aa).

A signal peptide spans 1–25; the sequence is MKRNFPKLIALSLILSLSVTPIANA. The propeptide occupies 26 to 214; the sequence is ESNSNIKAKD…TSQFKSNNYT (189 aa). Residues Cys-238, His-334, and Asn-355 contribute to the active site.

The protein belongs to the peptidase C47 family. As to quaternary structure, in the cytoplasm, prematurely activated/folded ScpA forms a stable non-covalent complex with ScpB. Post-translationally, cleavage leads to the activation of ScpA probably by an auto-catalytic manner.

Its subcellular location is the secreted. The catalysed reaction is Broad endopeptidase action on proteins including elastin, but rather limited hydrolysis of small-molecule substrates. Assays are conveniently made with hemoglobin, casein or Z-Phe-Arg-NHMec as substrate.. Its activity is regulated as follows. Prematurely activated/folded staphopain A is inhibited by staphostatin A (ScpB), which is probably required to protect staphylococcal cytoplasmic proteins from degradation by ScpA. Functionally, cysteine protease that plays an important role in the inhibition of host innate immune response. Cleaves host elastins found in connective tissues, pulmonary surfactant protein A in the lungs, and the chemokine receptor CXCR2 on leukocytes. Proteolytic cleavage of surfactant protein A impairs bacterial phagocytosis by neutrophils while CXCR2 degradation blocks neutrophil activation and chemotaxis. Additionally, promotes vascular leakage by activating the plasma kallikerin/kinin system, resulting in hypotension. The chain is Staphopain A (sspP) from Staphylococcus aureus (strain MSSA476).